We begin with the raw amino-acid sequence, 123 residues long: Small ribosomal subunit protein uS12cz/uS12cy (123 aa).

It belongs to the universal ribosomal protein uS12 family. Part of the 30S ribosomal subunit.

The protein resides in the plastid. It localises to the chloroplast. With S4 and S5 plays an important role in translational accuracy. Located at the interface of the 30S and 50S subunits. This Gossypium hirsutum (Upland cotton) protein is Small ribosomal subunit protein uS12cz/uS12cy (rps12-A).